The primary structure comprises 86 residues: Large ribosomal subunit protein uL24 (86 aa).

This sequence belongs to the universal ribosomal protein uL24 family. In terms of assembly, part of the 50S ribosomal subunit.

Functionally, one of two assembly initiator proteins, it binds directly to the 5'-end of the 23S rRNA, where it nucleates assembly of the 50S subunit. In terms of biological role, one of the proteins that surrounds the polypeptide exit tunnel on the outside of the subunit. The sequence is that of Large ribosomal subunit protein uL24 from Bdellovibrio bacteriovorus (strain ATCC 15356 / DSM 50701 / NCIMB 9529 / HD100).